The chain runs to 76 residues: Large ribosomal subunit protein bL31 (76 aa).

Zn(2+) contacts are provided by cysteine 16, cysteine 18, cysteine 37, and cysteine 40.

The protein belongs to the bacterial ribosomal protein bL31 family. Type A subfamily. In terms of assembly, part of the 50S ribosomal subunit. Zn(2+) serves as cofactor.

Its function is as follows. Binds the 23S rRNA. The sequence is that of Large ribosomal subunit protein bL31 from Solibacter usitatus (strain Ellin6076).